A 312-amino-acid chain; its full sequence is DNA-directed RNA polymerase subunit alpha (312 aa).

The tract at residues 1–226 (MIEFEKPNIT…EHLNLFTNLT (226 aa)) is alpha N-terminal domain (alpha-NTD). Residues 243-312 (DDRILERTIE…DLGLGLKNDK (70 aa)) are alpha C-terminal domain (alpha-CTD).

The protein belongs to the RNA polymerase alpha chain family. Homodimer. The RNAP catalytic core consists of 2 alpha, 1 beta, 1 beta' and 1 omega subunit. When a sigma factor is associated with the core the holoenzyme is formed, which can initiate transcription.

The enzyme catalyses RNA(n) + a ribonucleoside 5'-triphosphate = RNA(n+1) + diphosphate. Functionally, DNA-dependent RNA polymerase catalyzes the transcription of DNA into RNA using the four ribonucleoside triphosphates as substrates. The protein is DNA-directed RNA polymerase subunit alpha of Streptococcus sanguinis (strain SK36).